A 201-amino-acid chain; its full sequence is ATP-dependent Clp protease proteolytic subunit (201 aa).

Ser-103 (nucleophile) is an active-site residue. His-128 is an active-site residue.

The protein belongs to the peptidase S14 family. In terms of assembly, fourteen ClpP subunits assemble into 2 heptameric rings which stack back to back to give a disk-like structure with a central cavity, resembling the structure of eukaryotic proteasomes.

It localises to the cytoplasm. The enzyme catalyses Hydrolysis of proteins to small peptides in the presence of ATP and magnesium. alpha-casein is the usual test substrate. In the absence of ATP, only oligopeptides shorter than five residues are hydrolyzed (such as succinyl-Leu-Tyr-|-NHMec, and Leu-Tyr-Leu-|-Tyr-Trp, in which cleavage of the -Tyr-|-Leu- and -Tyr-|-Trp bonds also occurs).. Functionally, cleaves peptides in various proteins in a process that requires ATP hydrolysis. Has a chymotrypsin-like activity. Plays a major role in the degradation of misfolded proteins. This chain is ATP-dependent Clp protease proteolytic subunit, found in Bordetella avium (strain 197N).